A 101-amino-acid polypeptide reads, in one-letter code: Integration host factor subunit alpha (101 aa).

It belongs to the bacterial histone-like protein family. As to quaternary structure, heterodimer of an alpha and a beta chain.

This protein is one of the two subunits of integration host factor, a specific DNA-binding protein that functions in genetic recombination as well as in transcriptional and translational control. This chain is Integration host factor subunit alpha, found in Alkalilimnicola ehrlichii (strain ATCC BAA-1101 / DSM 17681 / MLHE-1).